Here is a 438-residue protein sequence, read N- to C-terminus: Transcriptional enhancer factor TEF-3 (438 aa).

Residues 1 to 18 show a composition bias toward polar residues; it reads MTSEWSSPASPEGSNDSG. Disordered stretches follow at residues 1–36 and 195–217; these read MTSEWSSPASPEGSNDSGGSEALDKPIDNDAEGVWS and QPSLPLPGFDSPTGLPPSSSTPA. Positions 28–104 form a DNA-binding region, TEA; the sequence is DNDAEGVWSP…QVLARRKARE (77 aa). The span at 205-216 shows a compositional bias: low complexity; sequence SPTGLPPSSSTP.

In terms of tissue distribution, enriched in cardiac and skeletal muscle.

Its subcellular location is the nucleus. Functionally, transcription factor which plays a key role in the Hippo signaling pathway, a pathway involved in organ size control and tumor suppression by restricting proliferation and promoting apoptosis. The core of this pathway is composed of a kinase cascade wherein MST1/MST2, in complex with its regulatory protein SAV1, phosphorylates and activates LATS1/2 in complex with its regulatory protein MOB1, which in turn phosphorylates and inactivates YAP1 oncoprotein and WWTR1/TAZ. Binds m-cat elements from muscle-specific promoters and differentially activate transcription. In terms of biological role, isoform B has probably a transactivation capacity that is lacking in the other isoforms. Isoform D may be defective in DNA binding. The sequence is that of Transcriptional enhancer factor TEF-3 (TEAD4) from Gallus gallus (Chicken).